The primary structure comprises 274 residues: Nitrogenase iron protein (274 aa).

Residue 8–15 participates in ATP binding; sequence GKGGIGKS. [4Fe-4S] cluster is bound at residue Cys-94. Arg-97 is subject to ADP-ribosylarginine; by dinitrogenase reductase ADP-ribosyltransferase. [4Fe-4S] cluster is bound at residue Cys-131.

It belongs to the NifH/BchL/ChlL family. Homodimer. The cofactor is [4Fe-4S] cluster. Post-translationally, the reversible ADP-ribosylation of Arg-97 inactivates the nitrogenase reductase and regulates nitrogenase activity.

It catalyses the reaction N2 + 8 reduced [2Fe-2S]-[ferredoxin] + 16 ATP + 16 H2O = H2 + 8 oxidized [2Fe-2S]-[ferredoxin] + 2 NH4(+) + 16 ADP + 16 phosphate + 6 H(+). Functionally, the key enzymatic reactions in nitrogen fixation are catalyzed by the nitrogenase complex, which has 2 components: the iron protein and the molybdenum-iron protein. The polypeptide is Nitrogenase iron protein (Chlorobium luteolum (strain DSM 273 / BCRC 81028 / 2530) (Pelodictyon luteolum)).